Here is a 152-residue protein sequence, read N- to C-terminus: Large ribosomal subunit protein bL9 (152 aa).

This sequence belongs to the bacterial ribosomal protein bL9 family.

In terms of biological role, binds to the 23S rRNA. This chain is Large ribosomal subunit protein bL9, found in Synechococcus sp. (strain CC9605).